A 92-amino-acid chain; its full sequence is Acylphosphatase (92 aa).

The Acylphosphatase-like domain maps to R5–T92. Catalysis depends on residues R20 and N38.

The protein belongs to the acylphosphatase family.

It carries out the reaction an acyl phosphate + H2O = a carboxylate + phosphate + H(+). This is Acylphosphatase (acyP) from Chlorobaculum tepidum (strain ATCC 49652 / DSM 12025 / NBRC 103806 / TLS) (Chlorobium tepidum).